Here is a 358-residue protein sequence, read N- to C-terminus: DNA replication and repair protein RecF (358 aa).

ATP is bound at residue 30-37 (GNNGSGKT).

This sequence belongs to the RecF family.

It localises to the cytoplasm. In terms of biological role, the RecF protein is involved in DNA metabolism; it is required for DNA replication and normal SOS inducibility. RecF binds preferentially to single-stranded, linear DNA. It also seems to bind ATP. The polypeptide is DNA replication and repair protein RecF (Actinobacillus succinogenes (strain ATCC 55618 / DSM 22257 / CCUG 43843 / 130Z)).